Reading from the N-terminus, the 968-residue chain is RNA polymerase-associated protein RapA (968 aa).

The 171-residue stretch at 164–334 (DVGRRHAPRV…FARLRLLDPN (171 aa)) folds into the Helicase ATP-binding domain. An ATP-binding site is contributed by 177 to 184 (DEVGLGKT). Residues 280 to 283 (DEAH) carry the DEAH box motif. A Helicase C-terminal domain is found at 490-662 (RVEWLMGYLT…YLASPDQTEG (173 aa)).

This sequence belongs to the SNF2/RAD54 helicase family. RapA subfamily. Interacts with the RNAP. Has a higher affinity for the core RNAP than for the holoenzyme. Its ATPase activity is stimulated by binding to RNAP.

Transcription regulator that activates transcription by stimulating RNA polymerase (RNAP) recycling in case of stress conditions such as supercoiled DNA or high salt concentrations. Probably acts by releasing the RNAP, when it is trapped or immobilized on tightly supercoiled DNA. Does not activate transcription on linear DNA. Probably not involved in DNA repair. This chain is RNA polymerase-associated protein RapA, found in Escherichia coli O9:H4 (strain HS).